We begin with the raw amino-acid sequence, 431 residues long: Adenylosuccinate synthetase 2 (431 aa).

GTP-binding positions include 13-19 (GDEGKGK) and 41-43 (GHT). The active-site Proton acceptor is the D14. Mg(2+) contacts are provided by D14 and G41. IMP-binding positions include 14 to 17 (DEGK), 39 to 42 (NAGH), T130, R144, Q225, T240, and R304. H42 functions as the Proton donor in the catalytic mechanism. 300 to 306 (SVTGRPR) is a binding site for substrate. Residues R306, 332 to 334 (KLD), and 414 to 416 (STG) each bind GTP.

It belongs to the adenylosuccinate synthetase family. In terms of assembly, homodimer. The cofactor is Mg(2+).

The protein resides in the cytoplasm. It catalyses the reaction IMP + L-aspartate + GTP = N(6)-(1,2-dicarboxyethyl)-AMP + GDP + phosphate + 2 H(+). It participates in purine metabolism; AMP biosynthesis via de novo pathway; AMP from IMP: step 1/2. Functionally, plays an important role in the de novo pathway of purine nucleotide biosynthesis. Catalyzes the first committed step in the biosynthesis of AMP from IMP. This is Adenylosuccinate synthetase 2 from Chromobacterium violaceum (strain ATCC 12472 / DSM 30191 / JCM 1249 / CCUG 213 / NBRC 12614 / NCIMB 9131 / NCTC 9757 / MK).